A 172-amino-acid polypeptide reads, in one-letter code: 3-hydroxydecanoyl-[acyl-carrier-protein] dehydratase (172 aa).

The active site involves H71.

This sequence belongs to the thioester dehydratase family. FabA subfamily. Homodimer.

It localises to the cytoplasm. The catalysed reaction is a (3R)-hydroxyacyl-[ACP] = a (2E)-enoyl-[ACP] + H2O. It carries out the reaction (3R)-hydroxydecanoyl-[ACP] = (2E)-decenoyl-[ACP] + H2O. The enzyme catalyses (2E)-decenoyl-[ACP] = (3Z)-decenoyl-[ACP]. The protein operates within lipid metabolism; fatty acid biosynthesis. Necessary for the introduction of cis unsaturation into fatty acids. Catalyzes the dehydration of (3R)-3-hydroxydecanoyl-ACP to E-(2)-decenoyl-ACP and then its isomerization to Z-(3)-decenoyl-ACP. Can catalyze the dehydratase reaction for beta-hydroxyacyl-ACPs with saturated chain lengths up to 16:0, being most active on intermediate chain length. The polypeptide is 3-hydroxydecanoyl-[acyl-carrier-protein] dehydratase (Brucella ovis (strain ATCC 25840 / 63/290 / NCTC 10512)).